We begin with the raw amino-acid sequence, 135 residues long: Peptide methionine sulfoxide reductase MsrB (135 aa).

The 123-residue stretch at 13–135 (DADWREQLTP…NGHSMVFEPV (123 aa)) folds into the MsrB domain. 4 residues coordinate Zn(2+): Cys-52, Cys-55, Cys-101, and Cys-104. Cys-124 acts as the Nucleophile in catalysis.

This sequence belongs to the MsrB Met sulfoxide reductase family. It depends on Zn(2+) as a cofactor.

It carries out the reaction L-methionyl-[protein] + [thioredoxin]-disulfide + H2O = L-methionyl-(R)-S-oxide-[protein] + [thioredoxin]-dithiol. The protein is Peptide methionine sulfoxide reductase MsrB of Agrobacterium fabrum (strain C58 / ATCC 33970) (Agrobacterium tumefaciens (strain C58)).